A 5087-amino-acid polypeptide reads, in one-letter code: Nonribosomal peptide synthetase sidC (5087 aa).

Residues 165–563 (HEMVRHTGNE…NGELQCMGRI (399 aa)) form an adenylation 1 region. The region spanning 671 to 744 (EPAGDIEQKI…KMAALVLKSQ (74 aa)) is the Carrier 1 domain. An O-(pantetheine 4'-phosphoryl)serine modification is found at Ser705. The segment at 782–1112 (DIIPCSPIQT…LFDTLFVWQD (331 aa)) is condensation 1. The segment at 1217–1611 (ELAKTDSERI…GRRDDLVKIR (395 aa)) is adenylation 2. The Carrier 2 domain maps to 1740-1817 (ENLTDNEAKV…RLTRKISQSI (78 aa)). At Ser1777 the chain carries O-(pantetheine 4'-phosphoryl)serine. Residues 1855–2272 (KILPCTSLQE…RVMDFSLVES (418 aa)) are condensation 2. Positions 2302–2378 (EEWSAESLEI…EIASVLQGSK (77 aa)) constitute a Carrier 3 domain. Position 2339 is an O-(pantetheine 4'-phosphoryl)serine (Ser2339). The interval 2419-2831 (PCTTPQAGML…STSSSLDTAS (413 aa)) is condensation 3. The segment at 2860 to 3258 (ATRHPSRVAL…GRIDDQVKLR (399 aa)) is adenylation 3. The 78-residue stretch at 3387 to 3464 (TEDTDTIRKI…LLAKAVESPD (78 aa)) folds into the Carrier 4 domain. Position 3424 is an O-(pantetheine 4'-phosphoryl)serine (Ser3424). Positions 3506–3910 (ITPCTSLQDG…RSLVEEPFSN (405 aa)) are condensation 4. Residues 3943–4019 (FQWSQAASLL…TMMAEVTVNG (77 aa)) form the Carrier 5 domain. An O-(pantetheine 4'-phosphoryl)serine modification is found at Ser3980. Positions 4051-4416 (EHIYPATPLQ…EYSICVELEA (366 aa)) are condensation 5. The Carrier 6 domain occupies 4496–4569 (SLLEERIRDT…KMAEIVNSAR (74 aa)). At Ser4530 the chain carries O-(pantetheine 4'-phosphoryl)serine. A condensation 6 region spans residues 4610–4913 (FLPATAGQVY…IQSDLHEIGS (304 aa)). The disordered stretch occupies residues 5013 to 5048 (DVYKVSPPGSQLSQDSPEKQEANNKPSPQPSVDIEA).

Belongs to the NRP synthetase family.

It participates in siderophore biosynthesis. Functionally, nonribosomal peptide synthetase; part of the siderophore biosynthetic pathway. Arthroderma benhamiae produces 2 types of extracellular siderophores, ferrichrome C and ferricrocin. The biosynthesis of these siderophores depends on the hydroxylation of ornithine to N(5)-hydroxyornithine, catalyzed by the monooxygenase sidA. The structure of ferricrocin differs from ferrichrome C only by a serine for alanine substitution and the assembly of both siderophores is suggested to be performed by the nonribosomal peptide synthase (NRPS) sidC. The sequence is that of Nonribosomal peptide synthetase sidC from Arthroderma benhamiae (strain ATCC MYA-4681 / CBS 112371) (Trichophyton mentagrophytes).